The primary structure comprises 542 residues: Protein MPA43 (542 aa).

This chain is Protein MPA43 (MPA43), found in Saccharomyces cerevisiae (strain ATCC 204508 / S288c) (Baker's yeast).